The primary structure comprises 213 residues: Charged multivesicular body protein 2b (213 aa).

A2 bears the N-acetylalanine mark. The stretch at 25 to 55 (QRAIIRDRAALEKQEKQLELEIKKMAKIGNK) forms a coiled coil. The tract at residues 178 to 202 (MAKAPSAARSLPSASTSKSTISDEE) is disordered. Residues 179–194 (AKAPSAARSLPSASTS) show a composition bias toward low complexity. At S199 the chain carries Phosphoserine. Positions 201–211 (EEIERQLKALG) match the MIT-interacting motif motif.

The protein belongs to the SNF7 family. Probable core component of the endosomal sorting required for transport complex III (ESCRT-III). ESCRT-III components are thought to multimerize to form a flat lattice on the perimeter membrane of the endosome. Several assembly forms of ESCRT-III may exist that interact and act sequentially. Interacts with CHMP2A. Interacts with VPS4A. Interacts with VPS4B; the interaction is direct.

The protein resides in the cytoplasm. Its subcellular location is the cytosol. The protein localises to the late endosome membrane. Probable core component of the endosomal sorting required for transport complex III (ESCRT-III) which is involved in multivesicular bodies (MVBs) formation and sorting of endosomal cargo proteins into MVBs. MVBs contain intraluminal vesicles (ILVs) that are generated by invagination and scission from the limiting membrane of the endosome and mostly are delivered to lysosomes enabling degradation of membrane proteins, such as stimulated growth factor receptors, lysosomal enzymes and lipids. The MVB pathway appears to require the sequential function of ESCRT-O, -I,-II and -III complexes. ESCRT-III proteins mostly dissociate from the invaginating membrane before the ILV is released. The ESCRT machinery also functions in topologically equivalent membrane fission events, such as the terminal stages of cytokinesis and the budding of enveloped viruses (lentiviruses). ESCRT-III proteins are believed to mediate the necessary vesicle extrusion and/or membrane fission activities, possibly in conjunction with the AAA ATPase VPS4. This is Charged multivesicular body protein 2b (CHMP2B) from Bos taurus (Bovine).